Consider the following 269-residue polypeptide: Formamidopyrimidine-DNA glycosylase (269 aa).

P2 acts as the Schiff-base intermediate with DNA in catalysis. E3 (proton donor) is an active-site residue. The Proton donor; for beta-elimination activity role is filled by K57. Residues H90, R109, and K150 each contribute to the DNA site. The FPG-type zinc finger occupies 235 to 269 (QVYGKAGESCPECGEAIQELKIGQRNTFYCSYCQC). Residue R259 is the Proton donor; for delta-elimination activity of the active site.

Belongs to the FPG family. Monomer. It depends on Zn(2+) as a cofactor.

The catalysed reaction is Hydrolysis of DNA containing ring-opened 7-methylguanine residues, releasing 2,6-diamino-4-hydroxy-5-(N-methyl)formamidopyrimidine.. It carries out the reaction 2'-deoxyribonucleotide-(2'-deoxyribose 5'-phosphate)-2'-deoxyribonucleotide-DNA = a 3'-end 2'-deoxyribonucleotide-(2,3-dehydro-2,3-deoxyribose 5'-phosphate)-DNA + a 5'-end 5'-phospho-2'-deoxyribonucleoside-DNA + H(+). Involved in base excision repair of DNA damaged by oxidation or by mutagenic agents. Acts as a DNA glycosylase that recognizes and removes damaged bases. Has a preference for oxidized purines, such as 7,8-dihydro-8-oxoguanine (8-oxoG). Has AP (apurinic/apyrimidinic) lyase activity and introduces nicks in the DNA strand. Cleaves the DNA backbone by beta-delta elimination to generate a single-strand break at the site of the removed base with both 3'- and 5'-phosphates. This chain is Formamidopyrimidine-DNA glycosylase, found in Vibrio vulnificus (strain YJ016).